A 194-amino-acid chain; its full sequence is Archaetidylinositol phosphate synthase (194 aa).

Transmembrane regions (helical) follow at residues 32–51 (IYTLASPVAAAAALPAWLYI) and 58–78 (LLIALSLLLDAVDGAVARFTG). The Mg(2+) site is built by Asp-67, Asp-70, Asp-88, and Asp-92. Asp-92 serves as the catalytic Proton acceptor. The next 3 helical transmembrane spans lie at 103–123 (LYIAGVHPLIVIAMLSGGLIV), 150–170 (IAILAILAISIYNLQTALALA), and 172–192 (AAAVLVWITVIQRMVYIAGEL).

The protein belongs to the CDP-alcohol phosphatidyltransferase class-I family. Mn(2+) serves as cofactor. Mg(2+) is required as a cofactor.

It is found in the cell membrane. It catalyses the reaction CDP-2,3-bis-O-(phytanyl)-sn-glycerol + 1D-myo-inositol 3-phosphate = saturated 1-archaetidyl-1D-myo-inositol 3-phosphate + CMP + H(+). The protein operates within lipid metabolism; phospholipid metabolism. Its function is as follows. Catalyzes the formation of archaetidylinositol phosphate (AIP) from CDP-archaeol (CDP-ArOH or CDP-2,3-bis-(O-phytanyl)-sn-glycerol) and 1L-myo-inositol 1-phosphate (IP or 1D-myo-inositol 3-phosphate). AIP is a precursor of archaetidyl-myo-inositol (AI), an ether-type inositol phospholipid ubiquitously distributed in archaea membranes and essential for glycolipid biosynthesis in archaea. The chain is Archaetidylinositol phosphate synthase from Aeropyrum pernix (strain ATCC 700893 / DSM 11879 / JCM 9820 / NBRC 100138 / K1).